The chain runs to 1098 residues: Probable DNA-directed RNA polymerase (1098 aa).

Residues P1 to L24 show a composition bias toward basic and acidic residues. The segment at P1–E26 is disordered. Active-site residues include D663, K750, and D915.

Belongs to the phage and mitochondrial RNA polymerase family.

The protein resides in the mitochondrion. It catalyses the reaction RNA(n) + a ribonucleoside 5'-triphosphate = RNA(n+1) + diphosphate. Functionally, DNA-dependent RNA polymerase catalyzes the transcription of DNA into RNA using the four ribonucleoside triphosphates as substrates. The chain is Probable DNA-directed RNA polymerase from Zea mays (Maize).